The primary structure comprises 174 residues: 2-C-methyl-D-erythritol 2,4-cyclodiphosphate synthase (174 aa).

Positions 13, 15, and 61 each coordinate a divalent metal cation. 4-CDP-2-C-methyl-D-erythritol 2-phosphate is bound at residue 13 to 15 (DAH). 4-CDP-2-C-methyl-D-erythritol 2-phosphate is bound by residues 75-77 (DIG), 149-152 (TTTD), Phe-156, and Arg-159.

This sequence belongs to the IspF family. Homotrimer. A divalent metal cation is required as a cofactor.

The enzyme catalyses 4-CDP-2-C-methyl-D-erythritol 2-phosphate = 2-C-methyl-D-erythritol 2,4-cyclic diphosphate + CMP. Its pathway is isoprenoid biosynthesis; isopentenyl diphosphate biosynthesis via DXP pathway; isopentenyl diphosphate from 1-deoxy-D-xylulose 5-phosphate: step 4/6. Its function is as follows. Involved in the biosynthesis of isopentenyl diphosphate (IPP) and dimethylallyl diphosphate (DMAPP), two major building blocks of isoprenoid compounds. Catalyzes the conversion of 4-diphosphocytidyl-2-C-methyl-D-erythritol 2-phosphate (CDP-ME2P) to 2-C-methyl-D-erythritol 2,4-cyclodiphosphate (ME-CPP) with a corresponding release of cytidine 5-monophosphate (CMP). In Bifidobacterium longum subsp. infantis (strain ATCC 15697 / DSM 20088 / JCM 1222 / NCTC 11817 / S12), this protein is 2-C-methyl-D-erythritol 2,4-cyclodiphosphate synthase.